The sequence spans 356 residues: 1-deoxy-D-xylulose 5-phosphate reductoisomerase (356 aa).

Residues T7, G8, S9, I10, G31, N33, and N111 each coordinate NADPH. K112 is a 1-deoxy-D-xylulose 5-phosphate binding site. E113 provides a ligand contact to NADPH. D131 provides a ligand contact to Mn(2+). S132, E133, S155, and H178 together coordinate 1-deoxy-D-xylulose 5-phosphate. Position 133 (E133) interacts with Mn(2+). G184 provides a ligand contact to NADPH. S191, N196, K197, and E200 together coordinate 1-deoxy-D-xylulose 5-phosphate. Position 200 (E200) interacts with Mn(2+).

Belongs to the DXR family. It depends on Mg(2+) as a cofactor. The cofactor is Mn(2+).

It catalyses the reaction 2-C-methyl-D-erythritol 4-phosphate + NADP(+) = 1-deoxy-D-xylulose 5-phosphate + NADPH + H(+). The protein operates within isoprenoid biosynthesis; isopentenyl diphosphate biosynthesis via DXP pathway; isopentenyl diphosphate from 1-deoxy-D-xylulose 5-phosphate: step 1/6. Its function is as follows. Catalyzes the NADPH-dependent rearrangement and reduction of 1-deoxy-D-xylulose-5-phosphate (DXP) to 2-C-methyl-D-erythritol 4-phosphate (MEP). The protein is 1-deoxy-D-xylulose 5-phosphate reductoisomerase of Campylobacter jejuni (strain RM1221).